A 287-amino-acid chain; its full sequence is BURP domain-containing protein 2 (287 aa).

Residues 1–21 (MARSLAALLLLLVAAAGASHA) form the signal peptide. A BURP domain is found at 67–287 (FFLEKDLFPG…PQDDMLWVRN (221 aa)).

As to expression, expressed in shoot.

This Oryza sativa subsp. japonica (Rice) protein is BURP domain-containing protein 2 (BURP2).